A 101-amino-acid polypeptide reads, in one-letter code: Acylphosphatase (101 aa).

One can recognise an Acylphosphatase-like domain in the interval 13–101; the sequence is RARILVRGVV…GEFRGFEIRY (89 aa). Catalysis depends on residues arginine 28 and asparagine 46.

The protein belongs to the acylphosphatase family.

The enzyme catalyses an acyl phosphate + H2O = a carboxylate + phosphate + H(+). The chain is Acylphosphatase (acyP) from Aeropyrum pernix (strain ATCC 700893 / DSM 11879 / JCM 9820 / NBRC 100138 / K1).